The sequence spans 169 residues: Methanogen homoaconitase small subunit (169 aa).

Positions 27 to 30 match the YLRT motif; sequence YLRT.

This sequence belongs to the LeuD family. LeuD type 2 subfamily. As to quaternary structure, heterotetramer of 2 HacA and 2 HacB proteins.

The enzyme catalyses (2R)-homocitrate = (2R,3S)-homoisocitrate. The catalysed reaction is (2R)-homocitrate = cis-homoaconitate + H2O. It catalyses the reaction (2R,3S)-homoisocitrate = cis-homoaconitate + H2O. It carries out the reaction cis-(homo)2aconitate + H2O = (2R,3S)-iso(homo)2citrate. The enzyme catalyses cis-(homo)3aconitate + H2O = (2R,3S)-iso(homo)3citrate. It functions in the pathway organic acid metabolism; 2-oxosuberate biosynthesis. Its function is as follows. Component of a hydro-lyase with broad substrate specificity for cis-unsaturated tricarboxylic acids. Catalyzes both the reversible dehydration of (R)-homocitrate ((R)-2-hydroxybutane-1,2,4-tricarboxylate) to produce cis-homoaconitate ((Z)-but-1-ene-1,2,4-tricarboxylate), and its hydration to homoisocitrate ((1R,2S)-1-hydroxybutane-1,2,4-tricarboxylate). Is also able to hydrate the analogous longer chain substrates cis-homo(2)-aconitate, cis-homo(3)-aconitate. These reactions are part of the biosynthesis pathway of coenzyme B. The polypeptide is Methanogen homoaconitase small subunit (hacB) (Methanosarcina mazei (strain ATCC BAA-159 / DSM 3647 / Goe1 / Go1 / JCM 11833 / OCM 88) (Methanosarcina frisia)).